Consider the following 289-residue polypeptide: 2-hydroxy-6-oxononadienedioate/2-hydroxy-6-oxononatrienedioate hydrolase 1 (289 aa).

Residues 39-275 (TVVMLHGSGP…RCGHWAQWEH (237 aa)) form the AB hydrolase-1 domain. H269 acts as the Proton acceptor in catalysis.

Belongs to the AB hydrolase superfamily. MhpC family. In terms of assembly, homodimer.

It carries out the reaction (2Z,4E)-2-hydroxy-6-oxonona-2,4-dienedioate + H2O = (2Z)-2-hydroxypenta-2,4-dienoate + succinate + H(+). The enzyme catalyses (2Z,4E,7E)-2-hydroxy-6-oxonona-2,4,7-trienedioate + H2O = (2Z)-2-hydroxypenta-2,4-dienoate + fumarate + H(+). It functions in the pathway aromatic compound metabolism; 3-phenylpropanoate degradation. Catalyzes the cleavage of the C5-C6 bond of 2-hydroxy-6-oxononadienedioate and 2-hydroxy-6-oxononatrienedioate, a dienol ring fission product of the bacterial meta-cleavage pathway for degradation of phenylpropionic acid. This chain is 2-hydroxy-6-oxononadienedioate/2-hydroxy-6-oxononatrienedioate hydrolase 1, found in Dechloromonas aromatica (strain RCB).